Reading from the N-terminus, the 115-residue chain is Meiotically up-regulated gene 106 protein (115 aa).

The N-terminal stretch at 1–34 is a signal peptide; the sequence is MSIKVEWIKFTRLKKCATLLVQLSLLRYRYMVLA. 2 helical membrane-spanning segments follow: residues 41–60 and 81–103; these read CIVV…GALF and GVKL…FTPY.

The protein localises to the membrane. Its function is as follows. Has a role in meiosis. This Schizosaccharomyces pombe (strain 972 / ATCC 24843) (Fission yeast) protein is Meiotically up-regulated gene 106 protein (mug106).